The primary structure comprises 269 residues: 5'-nucleotidase SurE (269 aa).

4 residues coordinate a divalent metal cation: Asp8, Asp9, Ser40, and Asn93.

It belongs to the SurE nucleotidase family. A divalent metal cation is required as a cofactor.

Its subcellular location is the cytoplasm. The enzyme catalyses a ribonucleoside 5'-phosphate + H2O = a ribonucleoside + phosphate. Nucleotidase that shows phosphatase activity on nucleoside 5'-monophosphates. The protein is 5'-nucleotidase SurE of Caulobacter sp. (strain K31).